A 237-amino-acid chain; its full sequence is Pyrimidine 5'-nucleotidase PynA (237 aa).

Catalysis depends on aspartate 9, which acts as the Nucleophile. Residues aspartate 9, aspartate 11, and aspartate 181 each contribute to the Mg(2+) site. The Proton donor role is filled by aspartate 11.

This sequence belongs to the HAD-like hydrolase superfamily. YjjG family. In terms of assembly, homodimer. Mg(2+) is required as a cofactor. The cofactor is Mn(2+).

Its subcellular location is the cytoplasm. It carries out the reaction a ribonucleoside 5'-phosphate + H2O = a ribonucleoside + phosphate. Nucleotidase that shows high phosphatase activity toward non-canonical pyrimidine nucleotides and three canonical nucleoside 5'-monophosphates (UMP, dUMP and dTMP), and no activity against IMP, UDP, GMP, AMP, UTP or pNPP. Appears to function as a house-cleaning nucleotidase in vivo, since the general nucleotidase activity of it allows it to protect cells against non-canonical pyrimidine derivatives such as 5-fluoro-2'-deoxyuridine monophosphate (5-FdUMP), and prevents the incorporation of potentially mutagenic nucleotides such as 5-bromo-2'-deoxyuridine (5-BrdU) into DNA. Is strictly specific to pyrimidine substrates with 5'-monophosphates and shows no activity against nucleoside di- and triphosphates. The protein is Pyrimidine 5'-nucleotidase PynA of Streptococcus pneumoniae (strain ATCC BAA-255 / R6).